A 233-amino-acid polypeptide reads, in one-letter code: Protein-methionine-sulfoxide reductase heme-binding subunit MsrQ (233 aa).

Helical transmembrane passes span 13–33, 44–64, 81–101, 117–137, 151–171, and 174–194; these read IKAA…HGLW, ALTR…LCVS, MLGL…LWLD, PFIT…LTSS, SLHR…LWLV, and VALL…GWRV. The Ferric oxidoreductase domain maps to 50–164; it reads GIWTLNFLFL…AVYAVAILGV (115 aa).

Belongs to the MsrQ family. As to quaternary structure, heterodimer of a catalytic subunit (MsrP) and a heme-binding subunit (MsrQ).

The protein localises to the cell inner membrane. Part of the MsrPQ system that repairs oxidized periplasmic proteins containing methionine sulfoxide residues (Met-O), using respiratory chain electrons. Thus protects these proteins from oxidative-stress damage caused by reactive species of oxygen and chlorine generated by the host defense mechanisms. MsrPQ is essential for the maintenance of envelope integrity under bleach stress, rescuing a wide series of structurally unrelated periplasmic proteins from methionine oxidation. MsrQ provides electrons for reduction to the reductase catalytic subunit MsrP, using the quinone pool of the respiratory chain. Probably involved in protection against reactive chlorine species (RCS) generated by chlorite and hypochlorite. The sequence is that of Protein-methionine-sulfoxide reductase heme-binding subunit MsrQ from Azospira oryzae (strain ATCC BAA-33 / DSM 13638 / PS) (Dechlorosoma suillum).